The chain runs to 157 residues: Small ribosomal subunit protein uS7 (157 aa).

Belongs to the universal ribosomal protein uS7 family. Part of the 30S ribosomal subunit. Contacts proteins S9 and S11.

Functionally, one of the primary rRNA binding proteins, it binds directly to 16S rRNA where it nucleates assembly of the head domain of the 30S subunit. Is located at the subunit interface close to the decoding center, probably blocks exit of the E-site tRNA. This Pseudomonas fluorescens (strain Pf0-1) protein is Small ribosomal subunit protein uS7.